The sequence spans 248 residues: 4-hydroxy-tetrahydrodipicolinate reductase (248 aa).

Residues 8–13 (GAKGRM), 75–77 (GTT), and 99–102 (ATNM) each bind NAD(+). His-131 functions as the Proton donor/acceptor in the catalytic mechanism. Position 132 (His-132) interacts with (S)-2,3,4,5-tetrahydrodipicolinate. The active-site Proton donor is Lys-135. Position 141–142 (141–142 (GT)) interacts with (S)-2,3,4,5-tetrahydrodipicolinate.

This sequence belongs to the DapB family.

It is found in the cytoplasm. It catalyses the reaction (S)-2,3,4,5-tetrahydrodipicolinate + NAD(+) + H2O = (2S,4S)-4-hydroxy-2,3,4,5-tetrahydrodipicolinate + NADH + H(+). The enzyme catalyses (S)-2,3,4,5-tetrahydrodipicolinate + NADP(+) + H2O = (2S,4S)-4-hydroxy-2,3,4,5-tetrahydrodipicolinate + NADPH + H(+). It functions in the pathway amino-acid biosynthesis; L-lysine biosynthesis via DAP pathway; (S)-tetrahydrodipicolinate from L-aspartate: step 4/4. Functionally, catalyzes the conversion of 4-hydroxy-tetrahydrodipicolinate (HTPA) to tetrahydrodipicolinate. The chain is 4-hydroxy-tetrahydrodipicolinate reductase from Campylobacter jejuni subsp. doylei (strain ATCC BAA-1458 / RM4099 / 269.97).